Consider the following 334-residue polypeptide: Ornithine carbamoyltransferase (334 aa).

Carbamoyl phosphate contacts are provided by residues 56–59, Q83, R107, and 134–137; these read STRT and HPTQ. L-ornithine-binding positions include N168, D232, and 236 to 237; that span reads SM. Residues 274-275 and R320 contribute to the carbamoyl phosphate site; that span reads CL.

Belongs to the aspartate/ornithine carbamoyltransferase superfamily. OTCase family.

The protein localises to the cytoplasm. The catalysed reaction is carbamoyl phosphate + L-ornithine = L-citrulline + phosphate + H(+). It functions in the pathway amino-acid biosynthesis; L-arginine biosynthesis; L-arginine from L-ornithine and carbamoyl phosphate: step 1/3. Functionally, reversibly catalyzes the transfer of the carbamoyl group from carbamoyl phosphate (CP) to the N(epsilon) atom of ornithine (ORN) to produce L-citrulline. This Escherichia coli O157:H7 protein is Ornithine carbamoyltransferase.